Here is a 291-residue protein sequence, read N- to C-terminus: Phosphatidylglycerol--prolipoprotein diacylglyceryl transferase (291 aa).

Transmembrane regions (helical) follow at residues 21–41, 60–80, 96–116, 130–150, 198–218, 225–245, and 260–280; these read VALH…MWLA, LLYA…VLFY, WDGG…MIIF, FIAP…FING, SQLY…NLFI, GAVS…VEFF, and ISMG…MMVW. Arg143 is an a 1,2-diacyl-sn-glycero-3-phospho-(1'-sn-glycerol) binding site.

Belongs to the Lgt family.

The protein resides in the cell inner membrane. It catalyses the reaction L-cysteinyl-[prolipoprotein] + a 1,2-diacyl-sn-glycero-3-phospho-(1'-sn-glycerol) = an S-1,2-diacyl-sn-glyceryl-L-cysteinyl-[prolipoprotein] + sn-glycerol 1-phosphate + H(+). It functions in the pathway protein modification; lipoprotein biosynthesis (diacylglyceryl transfer). Its function is as follows. Catalyzes the transfer of the diacylglyceryl group from phosphatidylglycerol to the sulfhydryl group of the N-terminal cysteine of a prolipoprotein, the first step in the formation of mature lipoproteins. The chain is Phosphatidylglycerol--prolipoprotein diacylglyceryl transferase from Salmonella agona (strain SL483).